The primary structure comprises 199 residues: GTP cyclohydrolase-2 (199 aa).

GTP is bound at residue 52–56; it reads RMHSE. Zn(2+) is bound by residues cysteine 57, cysteine 68, and cysteine 70. Residues glutamine 73, 94-96, and threonine 116 contribute to the GTP site; that span reads EGR. Aspartate 128 acts as the Proton acceptor in catalysis. The Nucleophile role is filled by arginine 130. Threonine 151 and lysine 156 together coordinate GTP.

It belongs to the GTP cyclohydrolase II family. The cofactor is Zn(2+).

It catalyses the reaction GTP + 4 H2O = 2,5-diamino-6-hydroxy-4-(5-phosphoribosylamino)-pyrimidine + formate + 2 phosphate + 3 H(+). The protein operates within cofactor biosynthesis; riboflavin biosynthesis; 5-amino-6-(D-ribitylamino)uracil from GTP: step 1/4. Its function is as follows. Catalyzes the conversion of GTP to 2,5-diamino-6-ribosylamino-4(3H)-pyrimidinone 5'-phosphate (DARP), formate and pyrophosphate. The sequence is that of GTP cyclohydrolase-2 from Aliivibrio salmonicida (strain LFI1238) (Vibrio salmonicida (strain LFI1238)).